A 103-amino-acid chain; its full sequence is Thioredoxin (103 aa).

The region spanning 1-103 is the Thioredoxin domain; that stretch reads MVKEITDATF…ELDEVINKYV (103 aa). A disulfide bridge links Cys-28 with Cys-31.

Belongs to the thioredoxin family.

Its function is as follows. Component of the thioredoxin-thioredoxin reductase system. Participates in various redox reactions through the reversible oxidation of its active center dithiol to a disulfide and catalyzes dithiol-disulfide exchange reactions. This Listeria innocua serovar 6a (strain ATCC BAA-680 / CLIP 11262) protein is Thioredoxin (trxA).